The following is a 186-amino-acid chain: dCTP deaminase, dUMP-forming (186 aa).

Residues 101 to 106 (RSSLGR), Asp-119, 127 to 129 (TLE), Gln-148, Tyr-162, and Gln-171 each bind dCTP. Glu-129 (proton donor/acceptor) is an active-site residue.

This sequence belongs to the dCTP deaminase family. Homotrimer.

The enzyme catalyses dCTP + 2 H2O = dUMP + NH4(+) + diphosphate. The protein operates within pyrimidine metabolism; dUMP biosynthesis; dUMP from dCTP: step 1/1. Its function is as follows. Bifunctional enzyme that catalyzes both the deamination of dCTP to dUTP and the hydrolysis of dUTP to dUMP without releasing the toxic dUTP intermediate. In Coprothermobacter proteolyticus (strain ATCC 35245 / DSM 5265 / OCM 4 / BT), this protein is dCTP deaminase, dUMP-forming.